A 267-amino-acid chain; its full sequence is MNTIEKRLNMDPIAIKLGPLEIRWYAICILLGLILGVYLATKEGPRKKIRQDDILDFILIAFPLSILGARIYYVAFSWSEYKDNILSIFAIWNGGIAIYGGLITGAIVLYFFTQYRFINTLDFLDIVAPSVMIAQAIGRWGNFFNQEAYGKAVESLNYLPAFIRDQMYIDGAYRQPTFLFESLWNLLGFGLVCVLRRRPKFLKQGEITAFYLVWYGCGRLLIEGLRTDSLMFLGIRVSQWLSGVLILVGIIMVVLRRRKSSIPFYQP.

4 consecutive transmembrane segments (helical) span residues 20-40 (LEIRWYAICILLGLILGVYLA), 57-77 (FILIAFPLSILGARIYYVAFS), 88-108 (IFAIWNGGIAIYGGLITGAIV), and 117-137 (FINTLDFLDIVAPSVMIAQAI). An a 1,2-diacyl-sn-glycero-3-phospho-(1'-sn-glycerol)-binding site is contributed by Arg139. Transmembrane regions (helical) follow at residues 175–195 (QPTFLFESLWNLLGFGLVCVL), 205–225 (GEITAFYLVWYGCGRLLIEGL), and 235–255 (IRVSQWLSGVLILVGIIMVVL).

The protein belongs to the Lgt family.

It is found in the cell membrane. The enzyme catalyses L-cysteinyl-[prolipoprotein] + a 1,2-diacyl-sn-glycero-3-phospho-(1'-sn-glycerol) = an S-1,2-diacyl-sn-glyceryl-L-cysteinyl-[prolipoprotein] + sn-glycerol 1-phosphate + H(+). Its pathway is protein modification; lipoprotein biosynthesis (diacylglyceryl transfer). Functionally, catalyzes the transfer of the diacylglyceryl group from phosphatidylglycerol to the sulfhydryl group of the N-terminal cysteine of a prolipoprotein, the first step in the formation of mature lipoproteins. The sequence is that of Phosphatidylglycerol--prolipoprotein diacylglyceryl transferase from Streptococcus suis (strain 98HAH33).